The sequence spans 545 residues: Membrane protein insertase YidC (545 aa).

Transmembrane regions (helical) follow at residues 350 to 370 (IIGN…AVLY), 424 to 444 (LPML…FASV), 461 to 481 (ADPY…QTYL), and 498 to 518 (PLVF…YWVV).

It belongs to the OXA1/ALB3/YidC family. Type 1 subfamily. Interacts with the Sec translocase complex via SecD. Specifically interacts with transmembrane segments of nascent integral membrane proteins during membrane integration.

It is found in the cell inner membrane. In terms of biological role, required for the insertion and/or proper folding and/or complex formation of integral membrane proteins into the membrane. Involved in integration of membrane proteins that insert both dependently and independently of the Sec translocase complex, as well as at least some lipoproteins. Aids folding of multispanning membrane proteins. This chain is Membrane protein insertase YidC, found in Neisseria meningitidis serogroup C (strain 053442).